The chain runs to 84 residues: Kunitz-type neurotoxin MitTx-alpha (84 aa).

The N-terminal stretch at 1 to 24 (MSSGGLLLLLGLLTLCAELTPVSS) is a signal peptide. Position 25 is a pyrrolidone carboxylic acid (Gln-25). Residues 31-82 (CYEDPPFFQKCGAFVDSYYFNRSRITCVHFFYGQCDVNQNHFTTMSECNRVC) form the BPTI/Kunitz inhibitor domain. 3 disulfide bridges follow: Cys-31–Cys-82, Cys-41–Cys-65, and Cys-57–Cys-78.

This sequence belongs to the venom Kunitz-type family. As to quaternary structure, heterodimer of an alpha (Kunitz-type) and a beta (phospholipase A2 homolog) chains; non-covalently-linked. As to expression, expressed by the venom gland.

It localises to the secreted. MitTx, a heteromeric complex between Kunitz- and phospholipase-A2-like proteins, potently, persistently and selectively activates rat and chicken acid-sensing ion channel ASIC1. Both alternatively spliced rat isoforms ASIC1a and ASIC1b are activated, with a higher potency for ASIC1a (EC(50)=9.4 nM) vs ASIC1b (EC(50)=23 nM). The rat ASIC3 subtype is also sensitive to the heterodimer, but with a lower potency (EC(50)=830 nM). On rat ASIC2a, the toxin shows a very weak activation, but produces a remarkable potentiation (&gt;100-fold) of protons when the extracellular pH drops below neutrality. Moderate and weak activations are also observed on the heterotrimers Asic1a-Asic2a and Asic1a-Asic3 (expressed in CHO cells), respectively. The binding sites of the beta subunit of MitTx and the spider psalmotoxin-1 overlap, explaining why these toxins are mutually exclusive. In vivo, the heterodimer elicits robust pain-related behavior in mice by activation of ASIC1 channels on capsaicin-sensitive nerve fibers. In Micrurus tener tener (Texas coral snake), this protein is Kunitz-type neurotoxin MitTx-alpha.